A 374-amino-acid chain; its full sequence is UPF0674 endoplasmic reticulum membrane protein C2G5.01 (374 aa).

A helical transmembrane segment spans residues 49-68 (FRLEFVILACFFLYVFSFIT). The N-linked (GlcNAc...) asparagine glycan is linked to asparagine 287. Positions 335–374 (KAAKKKVKSSGDISKLSESDQKKRMERERQRKMRRRAKKM) are disordered. Residues 349–363 (KLSESDQKKRMERER) are compositionally biased toward basic and acidic residues. The segment covering 364 to 374 (QRKMRRRAKKM) has biased composition (basic residues).

Belongs to the UPF0674 family.

Its subcellular location is the endoplasmic reticulum membrane. This is UPF0674 endoplasmic reticulum membrane protein C2G5.01 from Schizosaccharomyces pombe (strain 972 / ATCC 24843) (Fission yeast).